Here is a 219-residue protein sequence, read N- to C-terminus: Charged multivesicular body protein 5 (219 aa).

Positions T22–Y153 form a coiled coil.

Belongs to the SNF7 family. In terms of assembly, probable peripherally associated component of the endosomal sorting required for transport complex III (ESCRT-III).

The protein localises to the cytoplasm. The protein resides in the cytosol. It is found in the endosome membrane. Functionally, probable peripherally associated component of the endosomal sorting required for transport complex III (ESCRT-III) which is involved in multivesicular bodies (MVBs) formation and sorting of endosomal cargo proteins into MVBs. MVBs contain intraluminal vesicles (ILVs) that are generated by invagination and scission from the limiting membrane of the endosome and mostly are delivered to lysosomes enabling degradation of membrane proteins, such as stimulated growth factor receptors, lysosomal enzymes and lipids. This is Charged multivesicular body protein 5 (chmp5) from Xenopus laevis (African clawed frog).